A 485-amino-acid polypeptide reads, in one-letter code: Glutamate mutase epsilon subunit (485 aa).

Arg100 is an L-glutamate binding site. Asn123 serves as a coordination point for adenosylcob(III)alamin. L-glutamate is bound by residues 149–150 (KH) and Asp171. Adenosylcob(III)alamin-binding residues include Pro180, Phe297, Lys326, and Glu330.

Belongs to the methylaspartate mutase GlmE subunit family. In terms of assembly, heterotetramer composed of 2 epsilon subunits (GlmE) and 2 sigma subunits (GlmS). GlmE exists as a homodimer and GlmS as a monomer. Requires adenosylcob(III)alamin as cofactor.

It carries out the reaction (2S,3S)-3-methyl-L-aspartate = L-glutamate. The protein operates within amino-acid degradation; L-glutamate degradation via mesaconate pathway; acetate and pyruvate from L-glutamate: step 1/4. Its function is as follows. Catalyzes the carbon skeleton rearrangement of L-glutamate to L-threo-3-methylaspartate ((2S,3S)-3-methylaspartate). The sequence is that of Glutamate mutase epsilon subunit from Fusobacterium nucleatum subsp. nucleatum (strain ATCC 25586 / DSM 15643 / BCRC 10681 / CIP 101130 / JCM 8532 / KCTC 2640 / LMG 13131 / VPI 4355).